The primary structure comprises 127 residues: Glycine cleavage system H protein (127 aa).

In terms of domain architecture, Lipoyl-binding spans 22–104; sequence AVVIGITHFA…YEGAWMVKVE (83 aa). Lys-63 is modified (N6-lipoyllysine).

This sequence belongs to the GcvH family. In terms of assembly, the glycine cleavage system is composed of four proteins: P, T, L and H. It depends on (R)-lipoate as a cofactor.

The glycine cleavage system catalyzes the degradation of glycine. The H protein shuttles the methylamine group of glycine from the P protein to the T protein. Functionally, is also involved in protein lipoylation via its role as an octanoyl/lipoyl carrier protein intermediate. The polypeptide is Glycine cleavage system H protein (Bacillus mycoides (strain KBAB4) (Bacillus weihenstephanensis)).